A 651-amino-acid chain; its full sequence is Probable potassium transport system protein Kup (651 aa).

The next 12 membrane-spanning stretches (helical) occupy residues 41-61 (LVLG…IYAF), 82-102 (VVSF…VLFV), 130-150 (LILG…VITP), 163-183 (IVAP…LVTL), 194-214 (VAIV…ASGL), 235-255 (FLTV…LAMT), 276-296 (WLWI…AFIL), 309-329 (MIPS…TVIA), 366-386 (IYIP…VLGF), 395-415 (AYGI…YIVM), 426-446 (ALPI…ANII), and 450-470 (EGGW…WTWV).

It belongs to the HAK/KUP transporter (TC 2.A.72) family.

The protein localises to the cell inner membrane. The catalysed reaction is K(+)(in) + H(+)(in) = K(+)(out) + H(+)(out). Its function is as follows. Transport of potassium into the cell. Likely operates as a K(+):H(+) symporter. The sequence is that of Probable potassium transport system protein Kup from Brucella ovis (strain ATCC 25840 / 63/290 / NCTC 10512).